Here is a 638-residue protein sequence, read N- to C-terminus: Asparagine--tRNA ligase, cytoplasmic 2 (638 aa).

Residues 1-16 are compositionally biased toward basic and acidic residues; the sequence is MESHGKTHQKEHDNDL. Disordered stretches follow at residues 1–23 and 62–87; these read MESH…PITL and VKKN…DQAH.

Belongs to the class-II aminoacyl-tRNA synthetase family.

The protein localises to the cytoplasm. It localises to the cytosol. It catalyses the reaction tRNA(Asn) + L-asparagine + ATP = L-asparaginyl-tRNA(Asn) + AMP + diphosphate + H(+). The chain is Asparagine--tRNA ligase, cytoplasmic 2 from Arabidopsis thaliana (Mouse-ear cress).